The primary structure comprises 316 residues: DNA-directed RNA polymerase subunit alpha (316 aa).

The tract at residues 1–232 (MSGNDLFPST…DLFNPLHHCS (232 aa)) is alpha N-terminal domain (alpha-NTD). An alpha C-terminal domain (alpha-CTD) region spans residues 247–316 (KINDILVEEL…LNIYLPKEKY (70 aa)).

Belongs to the RNA polymerase alpha chain family. As to quaternary structure, in plastids the minimal PEP RNA polymerase catalytic core is composed of four subunits: alpha, beta, beta', and beta''. When a (nuclear-encoded) sigma factor is associated with the core the holoenzyme is formed, which can initiate transcription.

Its subcellular location is the plastid. It is found in the chloroplast. The catalysed reaction is RNA(n) + a ribonucleoside 5'-triphosphate = RNA(n+1) + diphosphate. Functionally, DNA-dependent RNA polymerase catalyzes the transcription of DNA into RNA using the four ribonucleoside triphosphates as substrates. The polypeptide is DNA-directed RNA polymerase subunit alpha (Mesostigma viride (Green alga)).